The following is a 102-amino-acid chain: MYAIIETGGKQVKVEEGQTVYIEKLAAEAGETVTFENVLFVGGDTVKVGNPSVAGATVTAKVEKQGRGKKITVFKYKPKKNNHKKQGHRQPYTKVVIEKINA.

It belongs to the bacterial ribosomal protein bL21 family. In terms of assembly, part of the 50S ribosomal subunit. Contacts protein L20.

In terms of biological role, this protein binds to 23S rRNA in the presence of protein L20. This chain is Large ribosomal subunit protein bL21, found in Bacillus pumilus (strain SAFR-032).